We begin with the raw amino-acid sequence, 73 residues long: Translation initiation factor IF-1 (73 aa).

The S1-like domain maps to 1–73; it reads MAKKQGAIEI…TRGRIVYRYK (73 aa).

It belongs to the IF-1 family. Component of the 30S ribosomal translation pre-initiation complex which assembles on the 30S ribosome in the order IF-2 and IF-3, IF-1 and N-formylmethionyl-tRNA(fMet); mRNA recruitment can occur at any time during PIC assembly.

The protein resides in the cytoplasm. Functionally, one of the essential components for the initiation of protein synthesis. Stabilizes the binding of IF-2 and IF-3 on the 30S subunit to which N-formylmethionyl-tRNA(fMet) subsequently binds. Helps modulate mRNA selection, yielding the 30S pre-initiation complex (PIC). Upon addition of the 50S ribosomal subunit IF-1, IF-2 and IF-3 are released leaving the mature 70S translation initiation complex. The sequence is that of Translation initiation factor IF-1 from Streptomyces coelicolor (strain ATCC BAA-471 / A3(2) / M145).